The sequence spans 271 residues: (+)-cis,trans-nepetalactol synthase NEPS1 (271 aa).

Residues 24 to 30, 49 to 51, 72 to 73, and N99 each bind NAD(+); these read GGASGIG, DIQ, and DV. Substrate contacts are provided by T154 and Y167. NAD(+)-binding positions include Y167, K171, and 200 to 205; that span reads VLTPLA. The active-site Proton acceptor is Y167.

It belongs to the short-chain dehydrogenases/reductases (SDR) family.

The catalysed reaction is (S)-8-oxocitronellyl enol = cis-trans-nepetalactol. It catalyses the reaction cis-cis-nepetalactol + NAD(+) = cis-cis-nepetalactone + NADH + H(+). The enzyme catalyses cis-trans-nepetalactol + NAD(+) = cis-trans-nepetalactone + NADH + H(+). In terms of biological role, bifunctional enzyme that possesses cyclase and dehydrogenase activities. Functions as a non-oxidoreductive cyclase to promote the formation of cis-trans-nepetalactol. Functions as dehydrogenase to oxidize cis-cis-nepetalactol and cis-trans-nepetalactol into nepetalactones, metabolites that are both insect-repellent and have euphoric effect in cats. Binds NAD(+) as classical short-chain dehydrogenase/reductase (SDR), but does not utilize it for its redox-neutral cyclase activity. This chain is (+)-cis,trans-nepetalactol synthase NEPS1, found in Nepeta racemosa (Catmint).